The sequence spans 595 residues: Isoprene synthase, chloroplastic (595 aa).

The transit peptide at Met1–Arg37 directs the protein to the chloroplast. Asp345 contacts dimethylallyl diphosphate. Mg(2+)-binding residues include Asp345 and Asp349. Residues Asp345–Asp349 carry the DDXXD motif motif. Dimethylallyl diphosphate contacts are provided by Glu423, Arg486, and Asn489. Mg(2+)-binding residues include Asn489, Ser493, and Glu497.

It belongs to the terpene synthase family. Tpsb subfamily. Homodimer. It depends on Mg(2+) as a cofactor. Requires Mn(2+) as cofactor.

It is found in the plastid. It localises to the chloroplast. The enzyme catalyses dimethylallyl diphosphate = isoprene + diphosphate. The protein operates within secondary metabolite biosynthesis; terpenoid biosynthesis. With respect to regulation, competitive inhibition is mediated by geranyl diphosphate (GPP). Lyase that catalyzes the formation of isoprene from dimethylallyl diphosphate via a syn-periplanar elimination mechanism in which the diphosphate-leaving group serves as a general base. The polypeptide is Isoprene synthase, chloroplastic (Populus canescens (Grey poplar)).